The following is a 115-amino-acid chain: Non-specific lipid-transfer protein (115 aa).

Positions 1 to 24 (MASSAVTKLALVVALCMAVSVAHA) are cleaved as a signal peptide. Disulfide bonds link C27-C74, C37-C51, C52-C97, and C72-C111.

It belongs to the plant LTP family.

Its function is as follows. Plant non-specific lipid-transfer proteins transfer phospholipids as well as galactolipids across membranes. May play a role in wax or cutin deposition in the cell walls of expanding epidermal cells and certain secretory tissues. This Malus domestica (Apple) protein is Non-specific lipid-transfer protein (MALD3).